The primary structure comprises 349 residues: AA9 family lytic polysaccharide monooxygenase A (349 aa).

Positions 1-19 are cleaved as a signal peptide; it reads MKSTFGLLALAAAAKLVSA. Cu(2+) contacts are provided by histidine 20 and histidine 102. A disulfide bond links cysteine 62 and cysteine 183. Histidine 169 is a binding site for O2. A Cu(2+)-binding site is contributed by tyrosine 180. The interval 233–304 is disordered; sequence DGSSSGSSGS…SGSNSGSDSC (72 aa). Low complexity-rich tracts occupy residues 234-262 and 269-304; these read GSSS…AVPT and TSAT…SDSC. Positions 311–347 constitute a CBM1 domain; that stretch reads GSVKIYGQCGGQNYSGPTSCEAGLICKEWNPYYHQCV. Asparagine 323 is a glycosylation site (N-linked (GlcNAc...) asparagine).

This sequence belongs to the polysaccharide monooxygenase AA9 family. Requires Cu(2+) as cofactor.

The protein localises to the secreted. It catalyses the reaction [(1-&gt;4)-beta-D-glucosyl]n+m + reduced acceptor + O2 = 4-dehydro-beta-D-glucosyl-[(1-&gt;4)-beta-D-glucosyl]n-1 + [(1-&gt;4)-beta-D-glucosyl]m + acceptor + H2O.. Lytic polysaccharide monooxygenase (LPMO) that depolymerizes crystalline and amorphous polysaccharides via the oxidation of scissile alpha- or beta-(1-4)-glycosidic bonds, yielding C4 oxidation products. Catalysis by LPMOs requires the reduction of the active-site copper from Cu(II) to Cu(I) by a reducing agent and H(2)O(2) or O(2) as a cosubstrate. The sequence is that of AA9 family lytic polysaccharide monooxygenase A (eglD) from Aspergillus fumigatus (strain CBS 144.89 / FGSC A1163 / CEA10) (Neosartorya fumigata).